Consider the following 296-residue polypeptide: N-acetylmuramic acid 6-phosphate etherase (296 aa).

The region spanning 54-217 (VTESFRKGGR…STTSMVGIGK (164 aa)) is the SIS domain. Glutamate 82 serves as the catalytic Proton donor. Glutamate 113 is an active-site residue.

It belongs to the GCKR-like family. MurNAc-6-P etherase subfamily. In terms of assembly, homodimer.

The enzyme catalyses N-acetyl-D-muramate 6-phosphate + H2O = N-acetyl-D-glucosamine 6-phosphate + (R)-lactate. Its pathway is amino-sugar metabolism; N-acetylmuramate degradation. Functionally, specifically catalyzes the cleavage of the D-lactyl ether substituent of MurNAc 6-phosphate, producing GlcNAc 6-phosphate and D-lactate. The polypeptide is N-acetylmuramic acid 6-phosphate etherase (Listeria welshimeri serovar 6b (strain ATCC 35897 / DSM 20650 / CCUG 15529 / CIP 8149 / NCTC 11857 / SLCC 5334 / V8)).